The chain runs to 394 residues: Phosphoglycerate kinase (394 aa).

Substrate is bound by residues 21–23, Arg36, 59–62, Arg118, and Arg151; these read DFN and HLGR. Ser183 bears the Phosphoserine mark. Position 201 (Lys201) interacts with ATP. Thr299 is subject to Phosphothreonine. ATP contacts are provided by residues Glu323 and 350 to 353; that span reads GGDS.

This sequence belongs to the phosphoglycerate kinase family. As to quaternary structure, monomer.

The protein localises to the cytoplasm. The catalysed reaction is (2R)-3-phosphoglycerate + ATP = (2R)-3-phospho-glyceroyl phosphate + ADP. It participates in carbohydrate degradation; glycolysis; pyruvate from D-glyceraldehyde 3-phosphate: step 2/5. The protein is Phosphoglycerate kinase of Geobacillus kaustophilus (strain HTA426).